A 1182-amino-acid polypeptide reads, in one-letter code: Rho GTPase-activating protein 20 (1182 aa).

The segment at 1–40 (MEAMSPQQDALGAQPGRSSSLTGMSRIAGGPGTKKKMKTL) is disordered. Serine 46 is subject to Phosphoserine. Positions 86–187 (LLIDGPVELK…SLLQRYIALE (102 aa)) constitute a PH domain. Residues 194–283 (KSIPLKIFAK…TALLTQGSKD (90 aa)) form the Ras-associating domain. Positions 365-551 (VSLPDICEND…FLIENCCRIF (187 aa)) constitute a Rho-GAP domain. 2 positions are modified to phosphoserine: serine 704 and serine 730. Disordered stretches follow at residues 744 to 791 (KQTQ…IQET), 932 to 953 (ASYS…SSQD), 981 to 1009 (QRKQ…GQAS), and 1140 to 1182 (EESG…GDRH). Over residues 757–775 (FKQSSVTGTDVSKRNTANE) the composition is skewed to polar residues. Residues 933-953 (SYSSLSSPGTSPSGSSVSSQD) are compositionally biased toward low complexity.

As to expression, highest expression is found in testis. Ubiquitously expressed in extragonadal tissues.

Functionally, GTPase activator for the Rho-type GTPases by converting them to an inactive GDP-bound state. This Rattus norvegicus (Rat) protein is Rho GTPase-activating protein 20 (Arhgap20).